A 270-amino-acid chain; its full sequence is MSAVEQPPVYKIALGIEYDGSKYYGWQRQNEVRSVQEKLEKALSQVANEPVNVFCAGRTDAGVHGTGQVVHFETTALRKDAAWTLGVNANLPGDIAVRWVKAVPEDFHARFSATARRYRYIIYNHRLRPAILGHGVTHFYEPLDAERMHRAAQCLIGENDFTSFRAVQCQSRTPWRNVMHINVTRHGAYVVVDIKANAFVHHMVRNIVGSLMEVGAHNQPESWIAELLAAKDRRLSAATAKAEGLYLVAVDYPERFDLPKTPLGPLFLAD.

Asp60 (nucleophile) is an active-site residue. Positions 107 to 111 (FHARF) are RNA binding. Position 118 (Tyr118) interacts with substrate. The segment at 168 to 172 (QCQSR) is interaction with tRNA.

It belongs to the tRNA pseudouridine synthase TruA family. Homodimer.

The enzyme catalyses uridine(38/39/40) in tRNA = pseudouridine(38/39/40) in tRNA. In terms of biological role, formation of pseudouridine at positions 38, 39 and 40 in the anticodon stem and loop of transfer RNAs. The sequence is that of tRNA pseudouridine synthase A from Citrobacter koseri (strain ATCC BAA-895 / CDC 4225-83 / SGSC4696).